Here is a 234-residue protein sequence, read N- to C-terminus: MEASDGQADEREEPLEQGTNARSLERRSSTTPAKDSLVRHAKGLDRDTFKICKEYLRPLKKFLRKLHLPKDLPQKKKLKYMKQSLVVLGDHINTFLQHYCRAWEIKHWKKMLWRFVSLFSELEAKQLRKLYKYTKNNQTTKFLMAFCPLDAPESSLLADQEDSLPKLCTAWGLRSHLNGMKERLSKLQAPGHPARLLKELRARGPRRRGSKLPQEPKLKRRRIKEAPDTPETCL.

The interval 1 to 38 (MEASDGQADEREEPLEQGTNARSLERRSSTTPAKDSLV) is disordered. Residues 44-145 (LDRDTFKICK…NNQTTKFLMA (102 aa)) form a CHD1 helical C-terminal domain (CHCT) region. Residues 200–234 (LRARGPRRRGSKLPQEPKLKRRRIKEAPDTPETCL) are disordered.

The protein resides in the cytoplasm. The protein localises to the nucleus. May play a role in regulation of apoptosis. This Bos taurus (Bovine) protein is CHD1 helical C-terminal domain containing protein 1 (CHCT1).